Reading from the N-terminus, the 348-residue chain is MASGKAGGASALFSEATQAEQLDSHTYRVNLNQGFCIGAVPNGGYTSACMLAAASKHLGPRGQPDTLTAHFEYPNRTSTGPAIVVIEDVKLGRQISTLHLTLWQGGLLSQAPWIDRSVSRRIVLAYTTHTNLRTFSGISMPTGYEVTPAAELPSVSDFEALKTHGADDAWAESKLPKGWAAMMLSLTQWRFYVPRKEPLSPGVLDMWIRLASGEKITQGALAYVVDSFPHNMHTFLAAPALRELLNASPERSGDSEVKDVRKKDQQRAEMWFPTVVMNIEAKTALPEEGVEWLSVRVSSKQIKEGKFDLEVLVRDTDGEMVALSNHVAMILSVERNTGKKSGSSKASL.

It participates in secondary metabolite biosynthesis. Functionally, thioesterase-like protein; part of the gene cluster that mediates the biosynthesis of wortmanamides A and B, reduced long-chain polyketides amidated with a specific omega-amino acid, 5-aminopentanoic acid (5PA). The PKS modules of TwmB are involved in the synthesis of the polyketide backbone, whereas the non-canonical C domain of TwmB is a bonafide condensation domain that specifically selects 5PA and catalyzes amidation to release polyketide chain. The C domain clearly prefers C16 and C18 fatty acyl substrates, which is consistent with simultaneous formation of both octaketide and nonaketide acyl amides wortmanamides A and B. Because TwmB lacks a designated enoylreductase (ER) domain, the required activity is provided the enoyl reductase TwmE. The roles of the remaining enzymes have still to be clarified. This chain is Thioesterase-like protein TwmA, found in Talaromyces wortmannii (Penicillium wortmannii).